The sequence spans 279 residues: Pantothenate synthetase (279 aa).

31–38 provides a ligand contact to ATP; the sequence is MGNLHGGH. H38 serves as the catalytic Proton donor. Position 62 (Q62) interacts with (R)-pantoate. Q62 is a binding site for beta-alanine. An ATP-binding site is contributed by 150–153; that stretch reads GRKD. Position 156 (Q156) interacts with (R)-pantoate. ATP contacts are provided by residues V179 and 187-190; that span reads KSSR.

The protein belongs to the pantothenate synthetase family. In terms of assembly, homodimer.

The protein resides in the cytoplasm. The catalysed reaction is (R)-pantoate + beta-alanine + ATP = (R)-pantothenate + AMP + diphosphate + H(+). Its pathway is cofactor biosynthesis; (R)-pantothenate biosynthesis; (R)-pantothenate from (R)-pantoate and beta-alanine: step 1/1. In terms of biological role, catalyzes the condensation of pantoate with beta-alanine in an ATP-dependent reaction via a pantoyl-adenylate intermediate. This Stenotrophomonas maltophilia (strain K279a) protein is Pantothenate synthetase.